Here is a 286-residue protein sequence, read N- to C-terminus: uncharacterized protein (286 aa).

In terms of domain architecture, AB hydrolase-1 spans 26 to 268 (PLIILCHGFC…DACHYDIYEG (243 aa)).

This sequence belongs to the AB hydrolase superfamily.

This is an uncharacterized protein from Escherichia coli.